Reading from the N-terminus, the 211-residue chain is Outer-membrane lipoprotein carrier protein (211 aa).

The first 24 residues, 1–24 (MNTIKILIGLLGIFLFSLSGIVSA), serve as a signal peptide directing secretion.

This sequence belongs to the LolA family. In terms of assembly, monomer.

The protein resides in the periplasm. Functionally, participates in the translocation of lipoproteins from the inner membrane to the outer membrane. Only forms a complex with a lipoprotein if the residue after the N-terminal Cys is not an aspartate (The Asp acts as a targeting signal to indicate that the lipoprotein should stay in the inner membrane). The polypeptide is Outer-membrane lipoprotein carrier protein (Coxiella burnetii (strain CbuK_Q154) (Coxiella burnetii (strain Q154))).